The following is a 185-amino-acid chain: V-type ATP synthase subunit E (185 aa).

Belongs to the V-ATPase E subunit family.

In terms of biological role, produces ATP from ADP in the presence of a proton gradient across the membrane. In Deinococcus radiodurans (strain ATCC 13939 / DSM 20539 / JCM 16871 / CCUG 27074 / LMG 4051 / NBRC 15346 / NCIMB 9279 / VKM B-1422 / R1), this protein is V-type ATP synthase subunit E.